Reading from the N-terminus, the 312-residue chain is Taste receptor type 2 member 9 (312 aa).

Residues 1–9 (MPSAIEAIY) lie on the Extracellular side of the membrane. The helical transmembrane segment at 10–32 (IILIAGELTIGIWGNGFIVLVNC) threads the bilayer. Residues 33 to 52 (IDWLKRRDISLIDIILISLA) are Cytoplasmic-facing. A helical membrane pass occupies residues 53-72 (ISRICLLCVISLDGFFMLLF). At 73-86 (PGTYGNSVLVSIVN) the chain is on the extracellular side. Residues 87 to 109 (VVWTFANNSSLWFTSCLSIFYLL) traverse the membrane as a helical segment. Residues 110-128 (KIANISHPFFFWLKLKINK) are Cytoplasmic-facing. A helical transmembrane segment spans residues 129-146 (VMLAILLGSFLISLIISV). Over 147–180 (PKNDDMWYHLFKVSHEENITWKFKVSKIPGTFKQ) the chain is Extracellular. Asn164 carries an N-linked (GlcNAc...) asparagine glycan. A helical membrane pass occupies residues 181–203 (LTLNLGVMVPFILCLISFFLLLF). Over 204–234 (SLVRHTKQIRLHATGFRDPSTEAHMRAIKAV) the chain is Cytoplasmic. A helical transmembrane segment spans residues 235–257 (IIFLLLLIVYYPVFLVMTSSALI). Over 258 to 261 (PQGK) the chain is Extracellular. The chain crosses the membrane as a helical span at residues 262–284 (LVLMIGDIVTVIFPSSHSFILIM). Residues 285 to 312 (GNSKLREAFLKMLRFVKCFLRRRKPFVP) lie on the Cytoplasmic side of the membrane.

It belongs to the G-protein coupled receptor T2R family. As to expression, expressed in subsets of taste receptor cells of the tongue and palate epithelium and exclusively in gustducin-positive cells.

The protein localises to the membrane. Its function is as follows. Gustducin-coupled receptor implicated in the perception of bitter compounds in the oral cavity and the gastrointestinal tract. Signals through PLCB2 and the calcium-regulated cation channel TRPM5. This is Taste receptor type 2 member 9 (TAS2R9) from Homo sapiens (Human).